The sequence spans 249 residues: Ubiquinone biosynthesis O-methyltransferase (249 aa).

S-adenosyl-L-methionine contacts are provided by R41, G72, D93, and M136.

Belongs to the methyltransferase superfamily. UbiG/COQ3 family.

It carries out the reaction a 3-demethylubiquinol + S-adenosyl-L-methionine = a ubiquinol + S-adenosyl-L-homocysteine + H(+). The enzyme catalyses a 3-(all-trans-polyprenyl)benzene-1,2-diol + S-adenosyl-L-methionine = a 2-methoxy-6-(all-trans-polyprenyl)phenol + S-adenosyl-L-homocysteine + H(+). It functions in the pathway cofactor biosynthesis; ubiquinone biosynthesis. O-methyltransferase that catalyzes the 2 O-methylation steps in the ubiquinone biosynthetic pathway. The chain is Ubiquinone biosynthesis O-methyltransferase from Mesorhizobium japonicum (strain LMG 29417 / CECT 9101 / MAFF 303099) (Mesorhizobium loti (strain MAFF 303099)).